The sequence spans 370 residues: Protein STRICTOSIDINE SYNTHASE-LIKE 9 (370 aa).

An N-terminal signal peptide occupies residues 1-26; sequence MPINQKIPTWFAVPAVFAVLSVISYQ. N-linked (GlcNAc...) asparagine glycosylation is found at asparagine 97 and asparagine 171.

This sequence belongs to the strictosidine synthase family.

The protein localises to the vacuole. This chain is Protein STRICTOSIDINE SYNTHASE-LIKE 9, found in Arabidopsis thaliana (Mouse-ear cress).